The primary structure comprises 112 residues: Transmembrane protein 14 homolog (112 aa).

Transmembrane regions (helical) follow at residues 9–26 (FKLNAAMAAIVLSGGVIG), 36–53 (LIAGSVFGLLYSTSAYYL), 60–77 (VGLGVSVLASSLLGGVMG), and 87–109 (IPIILATGSAFTLLSSGKELYNI).

The protein belongs to the TMEM14 family.

The protein resides in the membrane. This Dictyostelium discoideum (Social amoeba) protein is Transmembrane protein 14 homolog.